Consider the following 447-residue polypeptide: Mannose/glucose-specific lectin (447 aa).

3 Jacalin-type lectin domains span residues 5 to 148, 153 to 294, and 300 to 443; these read MISV…FVKP, TISF…YVKP, and SISI…FVKP.

This sequence belongs to the jacalin lectin family. Expressed in seeds (at protein level).

With respect to regulation, hemagglutinating activity is slightly inhibited by alpha-methyl-D-mannopyranoside. In terms of biological role, D-mannose/D-glucose-binding lectin that also binds derivatives N-acetyl-D-glucosamine and alpha-methyl-D-mannopyranoside. Does not bind D-galactose, L-Rhamnose, D-fructose, lactose or glycoproteins fetiun and mucin. Shows agglutinating activity towards human and rabbit erythrocytes. Also displays antimicrobial activity against L.infantum. The sequence is that of Mannose/glucose-specific lectin from Parkia pendula (Inga pendula).